Consider the following 58-residue polypeptide: Large ribosomal subunit protein uL30 (58 aa).

Belongs to the universal ribosomal protein uL30 family. In terms of assembly, part of the 50S ribosomal subunit.

The polypeptide is Large ribosomal subunit protein uL30 (Pseudomonas putida (strain W619)).